The sequence spans 86 residues: Phosphocarrier protein HPr (86 aa).

Residues 1 to 86 (MVKKEAIIKA…LAELIESFKE (86 aa)) enclose the HPr domain. The active-site Pros-phosphohistidine intermediate is His-15.

Belongs to the HPr family.

The protein resides in the cytoplasm. General (non sugar-specific) component of the phosphoenolpyruvate-dependent sugar phosphotransferase system (sugar PTS). This major carbohydrate active-transport system catalyzes the phosphorylation of incoming sugar substrates concomitantly with their translocation across the cell membrane. The phosphoryl group from phosphoenolpyruvate (PEP) is transferred to the phosphoryl carrier protein HPr by enzyme I. Phospho-HPr then transfers it to the PTS EIIA domain. In Borreliella burgdorferi (strain ATCC 35210 / DSM 4680 / CIP 102532 / B31) (Borrelia burgdorferi), this protein is Phosphocarrier protein HPr (ptsH).